We begin with the raw amino-acid sequence, 141 residues long: Galactose-6-phosphate isomerase subunit LacA (141 aa).

It belongs to the LacAB/RpiB family. As to quaternary structure, heteromultimeric protein consisting of LacA and LacB.

The catalysed reaction is aldehydo-D-galactose 6-phosphate = keto-D-tagatose 6-phosphate. It participates in carbohydrate metabolism; D-galactose 6-phosphate degradation; D-tagatose 6-phosphate from D-galactose 6-phosphate: step 1/1. This Streptococcus pneumoniae (strain P1031) protein is Galactose-6-phosphate isomerase subunit LacA.